The following is a 554-amino-acid chain: Sesquithujene synthase A (554 aa).

Mg(2+) is bound by residues Asp-308 and Asp-312. Positions 308 and 312 each coordinate substrate. The DDXXD motif signature appears at 308 to 312 (DDMFD). The segment at 407-411 (SIGAN) is determine the stereoselectivity of the enzyme. Residues Arg-449 and Asn-452 each contribute to the substrate site. The Mg(2+) site is built by Asn-452, Ser-456, and Glu-460.

Belongs to the terpene synthase family. In terms of assembly, monomer. It depends on Mg(2+) as a cofactor. Mn(2+) serves as cofactor. Highly expressed in the husk. Detected in leaves.

The protein localises to the cytoplasm. It carries out the reaction (2E,6E)-farnesyl diphosphate = sesquithujene + diphosphate. The enzyme catalyses (2Z,6Z)-farnesyl diphosphate = (1S,5S,6S)-alpha-bergamotene + diphosphate. The catalysed reaction is (2E,6E)-farnesyl diphosphate = (E)-beta-farnesene + diphosphate. It catalyses the reaction (2E,6E)-farnesyl diphosphate = (S)-beta-bisabolene + diphosphate. It carries out the reaction (2Z,6E)-farnesyl diphosphate = (-)-beta-curcumene + diphosphate. The enzyme catalyses (2E,6E)-farnesyl diphosphate = gamma-curcumene + diphosphate. The catalysed reaction is (2E,6E)-farnesyl diphosphate = sesquisabinene B + diphosphate. Its pathway is secondary metabolite biosynthesis; terpenoid biosynthesis. Its function is as follows. Sesquiterpene synthase involved in the production after herbivore attack of a blend of volatiles that attracts natural enemies of herbivores. Converts farnesyl diphosphate to sesquithujene, (S)-beta-bisabolene, (Z)-alpha-bergamotene, sesquisabinene B and several minor products. Can also act in vitro as a monoterpene synthase, converting geranyl diphosphate to (S)-(-)-limonene, beta-myrcene and 11 other monoterpenes. This Zea mays (Maize) protein is Sesquithujene synthase A.